A 251-amino-acid chain; its full sequence is UstYa family oxidase phomYb (251 aa).

The interval 1 to 47 (MDGYSSKKPRSASPSRSSLTEVEEEERDTLLKTVSLEEEDKSGENGP) is disordered. The chain crosses the membrane as a helical span at residues 58–78 (AIGILMLSNIAFIAAFLTVFV). An N-linked (GlcNAc...) asparagine glycan is attached at asparagine 135. Short sequence motifs (HXXHC) lie at residues 160-164 (HQLHC) and 187-191 (HVSHC).

The protein belongs to the ustYa family.

It is found in the membrane. It functions in the pathway mycotoxin biosynthesis. In terms of biological role, ustYa family oxidase; part of the gene cluster that mediates the biosynthesis of the phomopsins, a group of hexapeptide mycotoxins which infects lupins and causes lupinosis disease in livestock. Within the pathway, phomYb is probably involved in the construction of the macrocyclic structure of the phomopsins. The pathway starts with the processing of the precursor phomA by several endopeptidases including kexin proteases as well as the cluster-specific S41 family peptidase phomP1 and the oligopeptidase phomG to produce 10 identical copies of the hexapeptide Tyr-Val-Ile-Pro-Ile-Asp. After being excised from the precursor peptide, the core peptides are cyclized and modified post-translationally by enzymes encoded within the gene cluster. The timing and order of proteolysis of the phomA precursor and PTMs are still unknown. Two tyrosinase-like enzymes, phomQ1 and phomQ2, catalyze the chlorination and hydroxylation of Tyr, respectively. PhomYb, is proposed to be involved in the construction of the macrocyclic structure. The other 4 ustYa family proteins may be involved in PTMs that generate the unique structure of phomopsin A. PhomYa is required for the hydroxylation of C-beta of Tyr. PhomYc, phomYd, and phomYe are responsible for the biosynthesis of 2,3-dehydroisoleucine (dIle), 2,3-dehydroaspartic acid (dAsp), and 3,4-dehydroproline (dPro), respectively. While dIle formation by phomYc is indispensable for the installation of dAsp by phomYd, the order of the other PTMs have not been elucidated yet. Most of the biosynthetic enzymes likely have broad substrate specificity, and thus, there might be a metabolic grid from a precursor to phomopsin A. The enzyme(s) responsible for the biosynthesis of 3,4-dehydrovaline (dVal) have also not been identified yet. Finally, phomM acts as an S-adenosylmethionine-dependent alpha-N-methyltransferase that catalyzes two successive N-methylation reactions, converting N-desmethyl-phomopsin A to phomopsin A and phomopsin A further to an N,N-dimethylated congener called phomopsin E. The protein is UstYa family oxidase phomYb of Diaporthe leptostromiformis (Lupinosis disease fungus).